Consider the following 210-residue polypeptide: Large ribosomal subunit protein uL3 (210 aa).

Residues 125–151 (RHGQSRGPMSHGSRYHRRPGSMGPVAP) are disordered.

Belongs to the universal ribosomal protein uL3 family. Part of the 50S ribosomal subunit. Forms a cluster with proteins L14 and L19.

Its function is as follows. One of the primary rRNA binding proteins, it binds directly near the 3'-end of the 23S rRNA, where it nucleates assembly of the 50S subunit. The polypeptide is Large ribosomal subunit protein uL3 (Bacillus cereus (strain ATCC 14579 / DSM 31 / CCUG 7414 / JCM 2152 / NBRC 15305 / NCIMB 9373 / NCTC 2599 / NRRL B-3711)).